The primary structure comprises 329 residues: tRNA uridine(34) hydroxylase (329 aa).

The Rhodanese domain occupies S123–S217. C177 acts as the Cysteine persulfide intermediate in catalysis. The interval R285–K329 is disordered. A compositionally biased stretch (basic and acidic residues) spans G296–R323.

The protein belongs to the TrhO family.

The enzyme catalyses uridine(34) in tRNA + AH2 + O2 = 5-hydroxyuridine(34) in tRNA + A + H2O. Catalyzes oxygen-dependent 5-hydroxyuridine (ho5U) modification at position 34 in tRNAs. The sequence is that of tRNA uridine(34) hydroxylase from Vibrio atlanticus (strain LGP32) (Vibrio splendidus (strain Mel32)).